The primary structure comprises 110 residues: G antigen 2E (110 aa).

Residues 1 to 110 are disordered; sequence MSWRGRSTYY…NPEEVKTPEE (110 aa). 2 stretches are compositionally biased toward acidic residues: residues 32–45 and 87–96; these read FSDEVEPATPEEGE and ECEDGPDGQE.

This sequence belongs to the GAGE family.

The polypeptide is G antigen 2E (GAGE2E) (Homo sapiens (Human)).